The chain runs to 458 residues: Argininosuccinate lyase (458 aa).

It belongs to the lyase 1 family. Argininosuccinate lyase subfamily.

It is found in the cytoplasm. It carries out the reaction 2-(N(omega)-L-arginino)succinate = fumarate + L-arginine. The protein operates within amino-acid biosynthesis; L-arginine biosynthesis; L-arginine from L-ornithine and carbamoyl phosphate: step 3/3. In Neisseria gonorrhoeae (strain ATCC 700825 / FA 1090), this protein is Argininosuccinate lyase.